The primary structure comprises 103 residues: uncharacterized protein (103 aa).

The 54-residue stretch at 10-63 folds into the CHCH domain; sequence FPECDHLKQIYDKCFTEFFQKFITPNYRHQYAVNPCERLHDVYKRCVEERLATQ. 2 consecutive short sequence motifs (cx9C motif) follow at residues 13 to 23 and 45 to 55; these read CDHLKQIYDKC and CERLHDVYKRC. 2 disulfide bridges follow: cysteine 13–cysteine 55 and cysteine 23–cysteine 45. Positions 80 to 90 are enriched in basic and acidic residues; that stretch reads TDDDKLKDRQN. The disordered stretch occupies residues 80-103; sequence TDDDKLKDRQNNQKTNSENKCSSS. The segment covering 91-103 has biased composition (polar residues); that stretch reads NQKTNSENKCSSS.

Belongs to the TRIAP1/MDM35 family.

This is an uncharacterized protein from Caenorhabditis elegans.